We begin with the raw amino-acid sequence, 941 residues long: Cell wall protein IFF9 (941 aa).

The signal sequence occupies residues 1 to 20 (MQLFQNILVSIALLTQIVFA). Asn917 is lipidated: GPI-anchor amidated asparagine. Residues 918–941 (GSNKESIENIKYLALVVFGLMMFM) constitute a propeptide, removed in mature form.

The protein belongs to the HYR1/IFF family. In terms of processing, the GPI-anchor is attached to the protein in the endoplasmic reticulum and serves to target the protein to the cell surface. There, the glucosamine-inositol phospholipid moiety is cleaved off and the GPI-modified mannoprotein is covalently attached via its lipidless GPI glycan remnant to the 1,6-beta-glucan of the outer cell wall layer.

The protein localises to the secreted. It localises to the cell wall. Its subcellular location is the membrane. Its function is as follows. GPI-anchored cell wall protein involved in cell wall organization, hyphal growth, as well as in host-fungal interaction and virulence. This Candida albicans (strain SC5314 / ATCC MYA-2876) (Yeast) protein is Cell wall protein IFF9 (IFF9).